The following is a 448-amino-acid chain: Alginate biosynthesis transcriptional regulatory protein AlgB (448 aa).

One can recognise a Response regulatory domain in the interval 10–124 (RILLVDDESA…QLRLATAKQL (115 aa)). Asp-59 is subject to 4-aspartylphosphate. The region spanning 147 to 376 (LDSHSPSMMA…LRNVIERASI (230 aa)) is the Sigma-54 factor interaction domain. ATP-binding positions include 175–182 (GESGTGKG) and 238–247 (ADGGTLFLDE). The segment at residues 425 to 444 (LDQAAKTLGIDASTLYRKRK) is a DNA-binding region (H-T-H motif).

It functions in the pathway glycan biosynthesis; alginate biosynthesis [regulation]. In terms of biological role, positive regulator of the alginate biosynthetic gene algD. The protein is Alginate biosynthesis transcriptional regulatory protein AlgB (algB) of Pseudomonas syringae pv. tomato (strain ATCC BAA-871 / DC3000).